The sequence spans 408 residues: Ribulose bisphosphate carboxylase/oxygenase activase, chloroplastic (408 aa).

A chloroplast-targeting transit peptide spans 1–32 (MQVTMKSSAVSGQRVGGARVATRSVRRAQLQV). 138–145 (GGKGQGKT) is an ATP binding site.

The protein belongs to the RuBisCO activase family. In terms of assembly, monomer.

Its subcellular location is the plastid. It is found in the chloroplast stroma. In terms of biological role, activation of RuBisCO (ribulose-1,5-bisphosphate carboxylase/oxygenase; EC 4.1.1.39) involves the ATP-dependent carboxylation of the epsilon-amino group of lysine leading to a carbamate structure. This chain is Ribulose bisphosphate carboxylase/oxygenase activase, chloroplastic, found in Chlamydomonas reinhardtii (Chlamydomonas smithii).